Consider the following 312-residue polypeptide: Zinc-finger homeodomain protein 4 (312 aa).

The interval 20–74 is disordered; it reads GGGGSHGHMIHHHDHHAANSAPPTHNNNNTTQPPPMPLHGNGHGNNYDHHHHQDP. Over residues 37 to 50 the composition is skewed to low complexity; that stretch reads ANSAPPTHNNNNTT. The ZF-HD dimerization-type; degenerate zinc-finger motif lies at 90-139; it reads YKECLKNHAAAMGGNATDGCGEFMPSGEDGSIEALTCSACNCHRNFHRKE. The segment at residues 218-281 is a DNA-binding region (homeobox); the sequence is KKRFRTKFTP…NNKIHFSKKN (64 aa).

As to quaternary structure, homo- and heterodimer with other ZFHD proteins. Interacts with ZHD1, ZHD2, ZHD5, ZHD7, ZHD8, ZHD10 and ZHD11. In terms of tissue distribution, mostly expressed in flowers and inflorescence.

Its subcellular location is the nucleus. Putative transcription factor. Probably involved in the regulation of floral induction. The protein is Zinc-finger homeodomain protein 4 (ZHD4) of Arabidopsis thaliana (Mouse-ear cress).